The sequence spans 181 residues: Translationally-controlled tumor protein homolog (181 aa).

Residues 1-181 (MLIFKDAFTD…VKEALIEEKQ (181 aa)) enclose the TCTP domain.

The protein belongs to the TCTP family.

The protein resides in the cytoplasm. In terms of biological role, involved in calcium binding and microtubule stabilization. The chain is Translationally-controlled tumor protein homolog from Brugia malayi (Filarial nematode worm).